We begin with the raw amino-acid sequence, 385 residues long: 4-hydroxy-3-methylbut-2-en-1-yl diphosphate synthase (flavodoxin) 2 (385 aa).

The [4Fe-4S] cluster site is built by cysteine 280, cysteine 283, cysteine 315, and glutamate 322.

It belongs to the IspG family. [4Fe-4S] cluster is required as a cofactor.

The catalysed reaction is (2E)-4-hydroxy-3-methylbut-2-enyl diphosphate + oxidized [flavodoxin] + H2O + 2 H(+) = 2-C-methyl-D-erythritol 2,4-cyclic diphosphate + reduced [flavodoxin]. It participates in isoprenoid biosynthesis; isopentenyl diphosphate biosynthesis via DXP pathway; isopentenyl diphosphate from 1-deoxy-D-xylulose 5-phosphate: step 5/6. In terms of biological role, converts 2C-methyl-D-erythritol 2,4-cyclodiphosphate (ME-2,4cPP) into 1-hydroxy-2-methyl-2-(E)-butenyl 4-diphosphate. This is 4-hydroxy-3-methylbut-2-en-1-yl diphosphate synthase (flavodoxin) 2 from Streptomyces coelicolor (strain ATCC BAA-471 / A3(2) / M145).